Consider the following 629-residue polypeptide: tRNA uridine 5-carboxymethylaminomethyl modification enzyme MnmG (629 aa).

Position 11 to 16 (11 to 16) interacts with FAD; the sequence is GGGHAG. Position 273–287 (273–287) interacts with NAD(+); it reads GPRYCPSFEDKVVRF.

Belongs to the MnmG family. Homodimer. Heterotetramer of two MnmE and two MnmG subunits. Requires FAD as cofactor.

The protein localises to the cytoplasm. In terms of biological role, NAD-binding protein involved in the addition of a carboxymethylaminomethyl (cmnm) group at the wobble position (U34) of certain tRNAs, forming tRNA-cmnm(5)s(2)U34. The polypeptide is tRNA uridine 5-carboxymethylaminomethyl modification enzyme MnmG (Mycoplasma capricolum subsp. capricolum (strain California kid / ATCC 27343 / NCTC 10154)).